A 318-amino-acid polypeptide reads, in one-letter code: Cytosolic Fe-S cluster assembly factor Nubp1 homolog (318 aa).

The span at Met1 to Glu15 shows a compositional bias: basic and acidic residues. Residues Met1–Ser29 form a disordered region. The [4Fe-4S] cluster site is built by Cys17, Cys31, Cys34, and Cys40. Position 70 to 77 (Gly70 to Ser77) interacts with ATP. Residues Cys245 and Cys248 each contribute to the [4Fe-4S] cluster site.

Belongs to the Mrp/NBP35 ATP-binding proteins family. NUBP1/NBP35 subfamily. In terms of assembly, heterotetramer of 2 Nubp1 and 2 Nubp2 chains. [4Fe-4S] cluster is required as a cofactor.

The protein localises to the cytoplasm. Functionally, component of the cytosolic iron-sulfur (Fe/S) protein assembly (CIA) machinery. Required for maturation of extramitochondrial Fe-S proteins. The Nubp1-Nubp2 heterotetramer forms a Fe-S scaffold complex, mediating the de novo assembly of an Fe-S cluster and its transfer to target apoproteins. The polypeptide is Cytosolic Fe-S cluster assembly factor Nubp1 homolog (Aedes aegypti (Yellowfever mosquito)).